A 339-amino-acid chain; its full sequence is DNA-directed RNA polymerase subunit alpha (339 aa).

The tract at residues 1 to 235 is alpha N-terminal domain (alpha-NTD); that stretch reads MTIQKNWQEL…DQLNVFVNFE (235 aa). The interval 251–339 is alpha C-terminal domain (alpha-CTD); the sequence is FNPAFLKKVD…ELAKRFEDHY (89 aa).

The protein belongs to the RNA polymerase alpha chain family. As to quaternary structure, homodimer. The RNAP catalytic core consists of 2 alpha, 1 beta, 1 beta' and 1 omega subunit. When a sigma factor is associated with the core the holoenzyme is formed, which can initiate transcription.

The enzyme catalyses RNA(n) + a ribonucleoside 5'-triphosphate = RNA(n+1) + diphosphate. Its function is as follows. DNA-dependent RNA polymerase catalyzes the transcription of DNA into RNA using the four ribonucleoside triphosphates as substrates. In Rhodopseudomonas palustris (strain BisB18), this protein is DNA-directed RNA polymerase subunit alpha.